The following is an 88-amino-acid chain: Acyl-CoA-binding domain-containing protein 7 (88 aa).

Residues 3-88 (LQADFDKAAK…AKELIEKYGI (86 aa)) form the ACB domain. An acyl-CoA-binding positions include arginine 15, 30 to 34 (YGLYK), lysine 56, and tyrosine 75.

Belongs to the ACBD7 family.

Functionally, binds medium- and long-chain acyl-CoA esters. This Bos taurus (Bovine) protein is Acyl-CoA-binding domain-containing protein 7 (ACBD7).